Here is a 377-residue protein sequence, read N- to C-terminus: Nucleosome assembly protein 1;3 (377 aa).

Residues 26–80 (VNVLKNKLQGLTGKHSNVLENLSPNVRKRVEVLREIQTQHDELEAKFFEERAALE) are a coiled coil. Residues 47 to 62 (LSPNVRKRVEVLREIQ) carry the Nuclear export signal motif. Positions 223–228 (KKKPKK) match the Nuclear localization signal motif. Positions 298-377 (EAAQDEDYID…GERPPECKQQ (80 aa)) are disordered. Residues 300–341 (AQDEDYIDLEDDEDEEDDEDEDEDEEDEEEEDEDEDDDDEDE) are compositionally biased toward acidic residues. Positions 345 to 357 (KTKKKSSAGRKRS) are enriched in basic residues. Position 374 is a cysteine methyl ester (cysteine 374). A lipid anchor (S-farnesyl cysteine) is attached at cysteine 374. Residues 375 to 377 (KQQ) constitute a propeptide, removed in mature form.

The protein belongs to the nucleosome assembly protein (NAP) family. In terms of assembly, can form homomeric and heteromeric protein complexes with NAP1;4. Binds histones H2A and H2B in vivo. Also able to bind histones H1 and H4 in vitro. Interacts with CYCB1;1 and with alpha tubulin.

It localises to the nucleus. The protein localises to the cytoplasm. In terms of biological role, may modulate chromatin structure by regulation of nucleosome assembly/disassembly. Could function together with B-type cyclins in the regulation of microtubule dynamics. This chain is Nucleosome assembly protein 1;3 (NAP1;3), found in Nicotiana tabacum (Common tobacco).